The following is a 481-amino-acid chain: UDP-glucose 6-dehydrogenase (481 aa).

NAD(+) is bound by residues 16 to 21, aspartate 41, lysine 46, 94 to 98, 135 to 136, and glutamate 172; these read GAGYVG, VNTPT, and ST. Residues 168–172, 227–231, arginine 267, and 274–280 each bind substrate; these read EFLAE, KLVAN, and QASVGFG. Residue cysteine 283 is the Nucleophile of the active site. Residue 283 to 286 coordinates NAD(+); the sequence is CFQK. 345–346 contributes to the substrate binding site; it reads FK. Residue arginine 353 participates in NAD(+) binding. Arginine 447 is a substrate binding site.

It belongs to the UDP-glucose/GDP-mannose dehydrogenase family. As to expression, expressed in the vulva and in oocytes.

It carries out the reaction UDP-alpha-D-glucose + 2 NAD(+) + H2O = UDP-alpha-D-glucuronate + 2 NADH + 3 H(+). The protein operates within nucleotide-sugar biosynthesis; UDP-alpha-D-glucuronate biosynthesis; UDP-alpha-D-glucuronate from UDP-alpha-D-glucose: step 1/1. Its function is as follows. Involved in the biosynthesis of glycosaminoglycans; hyaluronan, chondroitin sulfate, and heparan sulfate. The polypeptide is UDP-glucose 6-dehydrogenase (sqv-4) (Caenorhabditis elegans).